The primary structure comprises 940 residues: UvrABC system protein A (940 aa).

32-39 (GLSGSGKS) is a binding site for ATP. A C4-type zinc finger spans residues 252–279 (CIDCGISIDEISPRLFSFNSPFGKCDYC). 2 consecutive ABC transporter domains span residues 309–589 (WANT…EGSL) and 609–937 (SNGK…HYLK). 641 to 648 (GVSGSGKS) contributes to the ATP binding site. The C4-type zinc-finger motif lies at 740–766 (CEACKGDGIIKIEMQFLSDVYVPCEIC).

The protein belongs to the ABC transporter superfamily. UvrA family. Forms a heterotetramer with UvrB during the search for lesions.

The protein localises to the cytoplasm. Functionally, the UvrABC repair system catalyzes the recognition and processing of DNA lesions. UvrA is an ATPase and a DNA-binding protein. A damage recognition complex composed of 2 UvrA and 2 UvrB subunits scans DNA for abnormalities. When the presence of a lesion has been verified by UvrB, the UvrA molecules dissociate. The polypeptide is UvrABC system protein A (Clostridium tetani (strain Massachusetts / E88)).